Here is a 92-residue protein sequence, read N- to C-terminus: MANSAQARKRARQAAKANSHNSALRSKYRTAVKAVRKAIEAGDAAQAAEIFKASAKTLDIIADKKIVHKNKAARHKSRLAAAVKGLQAPAAQ.

Residues 1–25 (MANSAQARKRARQAAKANSHNSALR) form a disordered region.

The protein belongs to the bacterial ribosomal protein bS20 family.

Binds directly to 16S ribosomal RNA. The protein is Small ribosomal subunit protein bS20 of Paraburkholderia phymatum (strain DSM 17167 / CIP 108236 / LMG 21445 / STM815) (Burkholderia phymatum).